Consider the following 396-residue polypeptide: Adenylyltransferase and sulfurtransferase UBA4 (396 aa).

ATP is bound by residues Gly-51, Asp-72, 79 to 83, Lys-95, and 139 to 140; these read SNLHR and DG. Zn(2+) is bound by residues Cys-180 and Cys-183. The Glycyl thioester intermediate; for adenylyltransferase activity role is filled by Cys-197. 2 residues coordinate Zn(2+): Cys-257 and Cys-260. The 90-residue stretch at 305–394 folds into the Rhodanese domain; sequence VSTKHILLDV…WAKNVDEKFP (90 aa). Residue Cys-355 is the Cysteine persulfide intermediate; for sulfurtransferase activity of the active site.

The protein in the N-terminal section; belongs to the HesA/MoeB/ThiF family. UBA4 subfamily. Zn(2+) is required as a cofactor.

The protein resides in the cytoplasm. The protein localises to the cytosol. It functions in the pathway tRNA modification; 5-methoxycarbonylmethyl-2-thiouridine-tRNA biosynthesis. Plays a central role in 2-thiolation of mcm(5)S(2)U at tRNA wobble positions of cytosolic tRNA(Lys), tRNA(Glu) and tRNA(Gln). Acts by mediating the C-terminal thiocarboxylation of sulfur carrier URM1. Its N-terminus first activates URM1 as acyl-adenylate (-COAMP), then the persulfide sulfur on the catalytic cysteine is transferred to URM1 to form thiocarboxylation (-COSH) of its C-terminus. The reaction probably involves hydrogen sulfide that is generated from the persulfide intermediate and that acts as a nucleophile towards URM1. Subsequently, a transient disulfide bond is formed. Does not use thiosulfate as sulfur donor; NFS1 probably acting as a sulfur donor for thiocarboxylation reactions. Prior mcm(5) tRNA modification by the elongator complex is required for 2-thiolation. May also be involved in protein urmylation. In Yarrowia lipolytica (strain CLIB 122 / E 150) (Yeast), this protein is Adenylyltransferase and sulfurtransferase UBA4.